Reading from the N-terminus, the 1296-residue chain is Phosphoribosylformylglycinamidine synthase (1296 aa).

A disordered region spans residues 304–323; it reads WPGAATGSGGEIRDEGATGR. Residues 306 to 317 and Ala-677 contribute to the ATP site; that span reads GAATGSGGEIRD. Residues Asp-678, Glu-717, Asn-721, and Asp-885 each contribute to the Mg(2+) site. Residue Ser-887 participates in ATP binding. A compositionally biased stretch (basic and acidic residues) spans 1000–1013; the sequence is PDCADQEHQAKQDE. The disordered stretch occupies residues 1000–1019; that stretch reads PDCADQEHQAKQDESDPGLN. Residues 1043–1296 form the Glutamine amidotransferase type-1 domain; sequence VAVLREQGVN…MFRNARKQLG (254 aa). The active-site Nucleophile is Cys-1136. Active-site residues include His-1261 and Glu-1263.

It in the N-terminal section; belongs to the FGAMS family. As to quaternary structure, monomer.

The protein resides in the cytoplasm. The enzyme catalyses N(2)-formyl-N(1)-(5-phospho-beta-D-ribosyl)glycinamide + L-glutamine + ATP + H2O = 2-formamido-N(1)-(5-O-phospho-beta-D-ribosyl)acetamidine + L-glutamate + ADP + phosphate + H(+). It functions in the pathway purine metabolism; IMP biosynthesis via de novo pathway; 5-amino-1-(5-phospho-D-ribosyl)imidazole from N(2)-formyl-N(1)-(5-phospho-D-ribosyl)glycinamide: step 1/2. Its function is as follows. Phosphoribosylformylglycinamidine synthase involved in the purines biosynthetic pathway. Catalyzes the ATP-dependent conversion of formylglycinamide ribonucleotide (FGAR) and glutamine to yield formylglycinamidine ribonucleotide (FGAM) and glutamate. In Yersinia pestis bv. Antiqua (strain Antiqua), this protein is Phosphoribosylformylglycinamidine synthase.